Consider the following 125-residue polypeptide: MIRGIGTDIVYIPRILRILQKYGKKFLNKIYTEQEIEISRKYNSQEMQAKYLAKRFAAKEAFVKALGGFSHGIIMKDIEIYNDVRGKPHLTVSKNFIFKDHMIHLSLSDDGDCATAFVIICSSLP.

Mg(2+)-binding residues include Asp8 and Glu60.

This sequence belongs to the P-Pant transferase superfamily. AcpS family. The cofactor is Mg(2+).

Its subcellular location is the cytoplasm. The enzyme catalyses apo-[ACP] + CoA = holo-[ACP] + adenosine 3',5'-bisphosphate + H(+). Its function is as follows. Transfers the 4'-phosphopantetheine moiety from coenzyme A to a Ser of acyl-carrier-protein. The chain is Holo-[acyl-carrier-protein] synthase from Wolbachia sp. subsp. Brugia malayi (strain TRS).